Consider the following 303-residue polypeptide: Coenzyme PQQ synthesis protein B (303 aa).

The protein belongs to the PqqB family.

It functions in the pathway cofactor biosynthesis; pyrroloquinoline quinone biosynthesis. Its function is as follows. May be involved in the transport of PQQ or its precursor to the periplasm. The polypeptide is Coenzyme PQQ synthesis protein B (Pseudomonas fluorescens (strain SBW25)).